We begin with the raw amino-acid sequence, 393 residues long: S-adenosylmethionine synthase 2 (393 aa).

Residue glutamate 9 participates in Mg(2+) binding. Histidine 15 provides a ligand contact to ATP. K(+) is bound at residue glutamate 43. L-methionine is bound by residues glutamate 56 and glutamine 99. ATP contacts are provided by residues 167–169 (DGK), 235–238 (SGRF), aspartate 246, 252–253 (RK), alanine 269, lysine 273, and lysine 277. Aspartate 246 provides a ligand contact to L-methionine. Lysine 277 serves as a coordination point for L-methionine.

This sequence belongs to the AdoMet synthase family. Homotetramer. It depends on Mn(2+) as a cofactor. Mg(2+) is required as a cofactor. Co(2+) serves as cofactor. Requires K(+) as cofactor. The cofactor is NH4(+). As to expression, mostly expressed in roots, and, to a lower extent, in hypocotyls and cotyledons.

The protein localises to the cytoplasm. The catalysed reaction is L-methionine + ATP + H2O = S-adenosyl-L-methionine + phosphate + diphosphate. The protein operates within amino-acid biosynthesis; S-adenosyl-L-methionine biosynthesis; S-adenosyl-L-methionine from L-methionine: step 1/1. Its activity is regulated as follows. Inhibited by products of SAMS reaction (SAM, Pi, PPi), substrate analogs (cycloleucine and ethionine), and alternative nucleotides (GTP, CTP and ADP). Strongly repressed by PPPi. Functionally, catalyzes the formation of S-adenosylmethionine from methionine and ATP. The reaction comprises two steps that are both catalyzed by the same enzyme: formation of S-adenosylmethionine (AdoMet) and triphosphate, and subsequent hydrolysis of the triphosphate. In Catharanthus roseus (Madagascar periwinkle), this protein is S-adenosylmethionine synthase 2 (SAMS2).